A 357-amino-acid chain; its full sequence is DNA replication and repair protein RecF (357 aa).

An ATP-binding site is contributed by 30 to 37; it reads GANGSGKT.

It belongs to the RecF family.

Its subcellular location is the cytoplasm. In terms of biological role, the RecF protein is involved in DNA metabolism; it is required for DNA replication and normal SOS inducibility. RecF binds preferentially to single-stranded, linear DNA. It also seems to bind ATP. This chain is DNA replication and repair protein RecF, found in Klebsiella pneumoniae subsp. pneumoniae (strain ATCC 700721 / MGH 78578).